The sequence spans 580 residues: Probable inactive 1-aminocyclopropane-1-carboxylate synthase-like protein 2 (580 aa).

Residues 1–43 form a disordered region; sequence MSENRNEGSSQAAKANSDTQTPSHFKVTHPRLRDQLKKKSSKK. Over residues 7–23 the composition is skewed to polar residues; the sequence is EGSSQAAKANSDTQTPS. Lys-417 is subject to N6-(pyridoxal phosphate)lysine.

It belongs to the class-I pyridoxal-phosphate-dependent aminotransferase family.

In Mus musculus (Mouse), this protein is Probable inactive 1-aminocyclopropane-1-carboxylate synthase-like protein 2 (Accsl).